A 99-amino-acid polypeptide reads, in one-letter code: DNA-directed RNA polymerase subunit omega (99 aa).

This sequence belongs to the RNA polymerase subunit omega family. The RNAP catalytic core consists of 2 alpha, 1 beta, 1 beta' and 1 omega subunit. When a sigma factor is associated with the core the holoenzyme is formed, which can initiate transcription.

It carries out the reaction RNA(n) + a ribonucleoside 5'-triphosphate = RNA(n+1) + diphosphate. In terms of biological role, promotes RNA polymerase assembly. Latches the N- and C-terminal regions of the beta' subunit thereby facilitating its interaction with the beta and alpha subunits. This Xanthomonas oryzae pv. oryzae (strain MAFF 311018) protein is DNA-directed RNA polymerase subunit omega.